Reading from the N-terminus, the 229-residue chain is UPF0758 protein CLL_A0562 (229 aa).

An MPN domain is found at 107-229 (KIMSPNDLAM…FISLKEKGFI (123 aa)). Zn(2+) is bound by residues H178, H180, and D191. Positions 178-191 (HNHPSGDPTPSKED) match the JAMM motif motif.

The protein belongs to the UPF0758 family.

The polypeptide is UPF0758 protein CLL_A0562 (Clostridium botulinum (strain Eklund 17B / Type B)).